We begin with the raw amino-acid sequence, 85 residues long: Inhibitor of dGTPase (85 aa).

Interacts with host dGTPase/dgt.

Its function is as follows. Plays a role in increasing the intracellular pool of dGTP. Interacts with and inhibits host dGTPase/dgt. The complex made of the host dGTPase and gene 1.2 protein creates a GTP-binding site of high affinity. Subsequent binding of GTP to the enzyme-inhibitor complex inhibits its dissociation. The polypeptide is Inhibitor of dGTPase (Escherichia coli (Bacteriophage T7)).